The chain runs to 335 residues: tRNA N6-adenosine threonylcarbamoyltransferase (335 aa).

Fe cation-binding residues include H110 and H114. Residues 132–136 (LVSGG), D165, G178, and N271 contribute to the substrate site. D299 contributes to the Fe cation binding site.

It belongs to the KAE1 / TsaD family. Fe(2+) is required as a cofactor.

It localises to the cytoplasm. It catalyses the reaction L-threonylcarbamoyladenylate + adenosine(37) in tRNA = N(6)-L-threonylcarbamoyladenosine(37) in tRNA + AMP + H(+). Its function is as follows. Required for the formation of a threonylcarbamoyl group on adenosine at position 37 (t(6)A37) in tRNAs that read codons beginning with adenine. Is involved in the transfer of the threonylcarbamoyl moiety of threonylcarbamoyl-AMP (TC-AMP) to the N6 group of A37, together with TsaE and TsaB. TsaD likely plays a direct catalytic role in this reaction. In Campylobacter jejuni subsp. doylei (strain ATCC BAA-1458 / RM4099 / 269.97), this protein is tRNA N6-adenosine threonylcarbamoyltransferase.